The chain runs to 361 residues: 3-dehydroquinate synthase (361 aa).

Residues 106-110, 130-131, K143, and K152 contribute to the NAD(+) site; these read GVVGD and TT. Residues E185, H247, and H264 each coordinate Zn(2+).

The protein belongs to the sugar phosphate cyclases superfamily. Dehydroquinate synthase family. It depends on NAD(+) as a cofactor. Co(2+) is required as a cofactor. Requires Zn(2+) as cofactor.

Its subcellular location is the cytoplasm. The enzyme catalyses 7-phospho-2-dehydro-3-deoxy-D-arabino-heptonate = 3-dehydroquinate + phosphate. The protein operates within metabolic intermediate biosynthesis; chorismate biosynthesis; chorismate from D-erythrose 4-phosphate and phosphoenolpyruvate: step 2/7. Functionally, catalyzes the conversion of 3-deoxy-D-arabino-heptulosonate 7-phosphate (DAHP) to dehydroquinate (DHQ). The chain is 3-dehydroquinate synthase from Gloeobacter violaceus (strain ATCC 29082 / PCC 7421).